Consider the following 256-residue polypeptide: Thiazole synthase (256 aa).

K96 functions as the Schiff-base intermediate with DXP in the catalytic mechanism. Residues G157, 183 to 184, and 205 to 206 each bind 1-deoxy-D-xylulose 5-phosphate; these read AG and NT.

Belongs to the ThiG family. In terms of assembly, homotetramer. Forms heterodimers with either ThiH or ThiS.

It is found in the cytoplasm. It carries out the reaction [ThiS sulfur-carrier protein]-C-terminal-Gly-aminoethanethioate + 2-iminoacetate + 1-deoxy-D-xylulose 5-phosphate = [ThiS sulfur-carrier protein]-C-terminal Gly-Gly + 2-[(2R,5Z)-2-carboxy-4-methylthiazol-5(2H)-ylidene]ethyl phosphate + 2 H2O + H(+). Its pathway is cofactor biosynthesis; thiamine diphosphate biosynthesis. Its function is as follows. Catalyzes the rearrangement of 1-deoxy-D-xylulose 5-phosphate (DXP) to produce the thiazole phosphate moiety of thiamine. Sulfur is provided by the thiocarboxylate moiety of the carrier protein ThiS. In vitro, sulfur can be provided by H(2)S. This Bacillus cereus (strain G9842) protein is Thiazole synthase.